A 935-amino-acid polypeptide reads, in one-letter code: Probable mediator of RNA polymerase II transcription subunit 15c (935 aa).

The segment covering 1-13 (MEGNTNWKPNEQG) has biased composition (polar residues). Disordered stretches follow at residues 1–28 (MEGN…WRSQ), 170–190 (NLPT…VSSS), 495–526 (SSVQ…HQMQ), 548–611 (QQVS…PVPG), and 635–654 (SSSK…PPEP). Positions 511–526 (MQQQQPQQGNHQHQMQ) are enriched in low complexity. Composition is skewed to polar residues over residues 548–577 (QQVS…SPQL) and 635–644 (SSSKLGTQET).

This sequence belongs to the plant Mediator complex subunit 15 family. Component of the Mediator complex.

It is found in the nucleus. Functionally, component of the Mediator complex, a coactivator involved in the regulated transcription of nearly all RNA polymerase II-dependent genes. Mediator functions as a bridge to convey information from gene-specific regulatory proteins to the basal RNA polymerase II transcription machinery. The Mediator complex, having a compact conformation in its free form, is recruited to promoters by direct interactions with regulatory proteins and serves for the assembly of a functional preinitiation complex with RNA polymerase II and the general transcription factors. This Arabidopsis thaliana (Mouse-ear cress) protein is Probable mediator of RNA polymerase II transcription subunit 15c (MED15C).